A 418-amino-acid chain; its full sequence is Light-independent protochlorophyllide reductase subunit N (418 aa).

[4Fe-4S] cluster is bound by residues C17, C42, and C103.

The protein belongs to the BchN/ChlN family. As to quaternary structure, protochlorophyllide reductase is composed of three subunits; ChlL, ChlN and ChlB. Forms a heterotetramer of two ChlB and two ChlN subunits. The cofactor is [4Fe-4S] cluster.

The catalysed reaction is chlorophyllide a + oxidized 2[4Fe-4S]-[ferredoxin] + 2 ADP + 2 phosphate = protochlorophyllide a + reduced 2[4Fe-4S]-[ferredoxin] + 2 ATP + 2 H2O. The protein operates within porphyrin-containing compound metabolism; chlorophyll biosynthesis (light-independent). In terms of biological role, component of the dark-operative protochlorophyllide reductase (DPOR) that uses Mg-ATP and reduced ferredoxin to reduce ring D of protochlorophyllide (Pchlide) to form chlorophyllide a (Chlide). This reaction is light-independent. The NB-protein (ChlN-ChlB) is the catalytic component of the complex. This is Light-independent protochlorophyllide reductase subunit N from Prochlorococcus marinus (strain SARG / CCMP1375 / SS120).